The following is a 112-amino-acid chain: MEKVLILLLVALAVAYAVPDPRGIIINLDEGELCLNSAQCTSKCCHREDGLSLARCAPKASENSECSAFTLYGIYYKCPCERGLTCNVDKTIVGSITNTNFGVCLDLGRATE.

A signal peptide spans 1–17 (MEKVLILLLVALAVAYA). Residues 18-22 (VPDPR) constitute a propeptide, enterostatin, activation peptide. 5 cysteine pairs are disulfide-bonded: cysteine 34–cysteine 45, cysteine 40–cysteine 56, cysteine 44–cysteine 78, cysteine 66–cysteine 86, and cysteine 80–cysteine 104.

Belongs to the colipase family. As to quaternary structure, forms a 1:1 stoichiometric complex with pancreatic lipase.

Its subcellular location is the secreted. In terms of biological role, colipase is a cofactor of pancreatic lipase. It allows the lipase to anchor itself to the lipid-water interface. Without colipase the enzyme is washed off by bile salts, which have an inhibitory effect on the lipase. Enterostatin has a biological activity as a satiety signal. The sequence is that of Colipase (CLPS) from Bos taurus (Bovine).